The primary structure comprises 1005 residues: Ephrin type-A receptor 5 (1005 aa).

Positions 1 to 24 (MRGSGPRGAGRRRTQGRGGGGDTP) are disordered. A signal peptide spans 1–26 (MRGSGPRGAGRRRTQGRGGGGDTPRV). Residues 27–575 (PASLAGCYSA…GASNDQSQIP (549 aa)) are Extracellular-facing. The Eph LBD domain occupies 62-240 (EVNLLDSRTV…YYKKCPSVVR (179 aa)). Asn266, Asn301, Asn371, Asn425, Asn438, and Asn463 each carry an N-linked (GlcNAc...) asparagine glycan. Fibronectin type-III domains follow at residues 359–469 (PPSA…TNQA) and 470–564 (APSP…TTPV). The chain crosses the membrane as a helical span at residues 576 to 596 (IIGVSVTVGVILLAVMIGFLL). Residues 597–1005 (SGSCCECGCG…MDAVAQVTLE (409 aa)) are Cytoplasmic-facing. Tyr652 and Tyr658 each carry phosphotyrosine; by autocatalysis. In terms of domain architecture, Protein kinase spans 677-938 (ITIERVIGAG…DIVNMLDKLI (262 aa)). ATP contacts are provided by residues 683–691 (IGAGEFGEV) and Lys709. The Proton acceptor role is filled by Asp802. A phosphotyrosine; by autocatalysis mark is found at Tyr835 and Tyr984. The region spanning 967–1005 (GAYRSVGEWLEATKMGRYTEIFMENGYSSMDAVAQVTLE) is the SAM domain.

Belongs to the protein kinase superfamily. Tyr protein kinase family. Ephrin receptor subfamily. Heterotetramer upon binding of the ligand. The heterotetramer is composed of an ephrin dimer and a receptor dimer. Oligomerization is probably required to induce biological responses. Interacts (via SAM domain) with SAMD5 (via SAM domain). In terms of processing, phosphorylated. Phosphorylation is stimulated by the ligand EFNA5. Dephosphorylation upon stimulation by glucose, inhibits EPHA5 forward signaling and results in insulin secretion. As to expression, almost exclusively expressed in the nervous system. Predominantly expressed in neurons.

It localises to the cell membrane. The protein localises to the cell projection. Its subcellular location is the axon. The protein resides in the dendrite. It carries out the reaction L-tyrosyl-[protein] + ATP = O-phospho-L-tyrosyl-[protein] + ADP + H(+). Functionally, receptor tyrosine kinase which binds promiscuously GPI-anchored ephrin-A family ligands residing on adjacent cells, leading to contact-dependent bidirectional signaling into neighboring cells. The signaling pathway downstream of the receptor is referred to as forward signaling while the signaling pathway downstream of the ephrin ligand is referred to as reverse signaling. Among GPI-anchored ephrin-A ligands, EFNA5 most probably constitutes the cognate/functional ligand for EPHA5. Functions as an axon guidance molecule during development and may be involved in the development of the retinotectal, entorhino-hippocampal and hippocamposeptal pathways. Together with EFNA5 plays also a role in synaptic plasticity in adult brain through regulation of synaptogenesis. In addition to its function in the nervous system, the interaction of EPHA5 with EFNA5 mediates communication between pancreatic islet cells to regulate glucose-stimulated insulin secretion. The sequence is that of Ephrin type-A receptor 5 (Epha5) from Rattus norvegicus (Rat).